The primary structure comprises 557 residues: Dihydroxy-acid dehydratase (557 aa).

Cys50 contacts [2Fe-2S] cluster. Mg(2+) is bound at residue Asp82. Residue Cys123 coordinates [2Fe-2S] cluster. Residues Asp124 and Lys125 each coordinate Mg(2+). An N6-carboxylysine modification is found at Lys125. [2Fe-2S] cluster is bound at residue Cys195. Mg(2+) is bound at residue Glu447. Catalysis depends on Ser473, which acts as the Proton acceptor.

The protein belongs to the IlvD/Edd family. As to quaternary structure, homodimer. It depends on [2Fe-2S] cluster as a cofactor. The cofactor is Mg(2+).

It catalyses the reaction (2R)-2,3-dihydroxy-3-methylbutanoate = 3-methyl-2-oxobutanoate + H2O. It carries out the reaction (2R,3R)-2,3-dihydroxy-3-methylpentanoate = (S)-3-methyl-2-oxopentanoate + H2O. Its pathway is amino-acid biosynthesis; L-isoleucine biosynthesis; L-isoleucine from 2-oxobutanoate: step 3/4. It functions in the pathway amino-acid biosynthesis; L-valine biosynthesis; L-valine from pyruvate: step 3/4. In terms of biological role, functions in the biosynthesis of branched-chain amino acids. Catalyzes the dehydration of (2R,3R)-2,3-dihydroxy-3-methylpentanoate (2,3-dihydroxy-3-methylvalerate) into 2-oxo-3-methylpentanoate (2-oxo-3-methylvalerate) and of (2R)-2,3-dihydroxy-3-methylbutanoate (2,3-dihydroxyisovalerate) into 2-oxo-3-methylbutanoate (2-oxoisovalerate), the penultimate precursor to L-isoleucine and L-valine, respectively. This Nitrosomonas europaea (strain ATCC 19718 / CIP 103999 / KCTC 2705 / NBRC 14298) protein is Dihydroxy-acid dehydratase.